The chain runs to 78 residues: Beta-defensin 29 (78 aa).

The first 23 residues, 1-23 (MPVTKPYFVTVAVLLILVDKTTG), serve as a signal peptide directing secretion. 3 disulfides stabilise this stretch: C40–C67, C47–C61, and C51–C68.

It belongs to the beta-defensin family.

Its subcellular location is the secreted. Has antibacterial activity. In Rattus norvegicus (Rat), this protein is Beta-defensin 29 (Defb29).